Reading from the N-terminus, the 404-residue chain is Argininosuccinate synthase (404 aa).

Residues 10–18 (AFSGGLDTS) and Ala37 contribute to the ATP site. L-citrulline contacts are provided by Tyr88 and Ser93. Gly118 serves as a coordination point for ATP. L-aspartate is bound by residues Thr120, Asn124, and Asp125. Asn124 is an L-citrulline binding site. Residues Arg128, Ser179, Ser188, Glu264, and Tyr276 each coordinate L-citrulline.

Belongs to the argininosuccinate synthase family. Type 1 subfamily. In terms of assembly, homotetramer.

Its subcellular location is the cytoplasm. The catalysed reaction is L-citrulline + L-aspartate + ATP = 2-(N(omega)-L-arginino)succinate + AMP + diphosphate + H(+). It participates in amino-acid biosynthesis; L-arginine biosynthesis; L-arginine from L-ornithine and carbamoyl phosphate: step 2/3. In Nitrosomonas europaea (strain ATCC 19718 / CIP 103999 / KCTC 2705 / NBRC 14298), this protein is Argininosuccinate synthase.